The sequence spans 449 residues: Exodeoxyribonuclease 7 large subunit (449 aa).

It belongs to the XseA family. Heterooligomer composed of large and small subunits.

The protein resides in the cytoplasm. The catalysed reaction is Exonucleolytic cleavage in either 5'- to 3'- or 3'- to 5'-direction to yield nucleoside 5'-phosphates.. Its function is as follows. Bidirectionally degrades single-stranded DNA into large acid-insoluble oligonucleotides, which are then degraded further into small acid-soluble oligonucleotides. This Latilactobacillus sakei subsp. sakei (strain 23K) (Lactobacillus sakei subsp. sakei) protein is Exodeoxyribonuclease 7 large subunit.